We begin with the raw amino-acid sequence, 2179 residues long: Genome polyprotein (2179 aa).

Residues M1 to T20 are disordered. G2 is lipidated: N-myristoyl glycine; by host. The Cytoplasmic portion of the chain corresponds to G2–N1491. The interval A564–T584 is amphipathic alpha-helix. Active-site for protease 2A activity residues include H876 and D894. The Zn(2+) site is built by C911 and C913. C965 serves as the catalytic For protease 2A activity. The Zn(2+) site is built by C971 and H973. The segment at N1101–R1173 is membrane-binding. The tract at residues N1101–T1239 is oligomerization. An RNA-binding region spans residues A1122–S1126. The 157-residue stretch at K1205 to N1361 folds into the SF3 helicase domain. Residues C1369, C1372, C1381, and C1386 each contribute to the Zn(2+) site. A C4-type zinc finger spans residues C1369–C1386. The segment at D1413–I1420 is RNA-binding. The interval L1424–Q1429 is oligomerization. An intramembrane segment occupies T1492–Y1507. Residues K1508–F2179 are Cytoplasmic-facing. Y1517 carries the post-translational modification O-(5'-phospho-RNA)-tyrosine. In terms of domain architecture, Peptidase C3 spans G1538–F1715. Catalysis depends on for protease 3C activity residues H1577, E1608, and C1683. Positions G1946–V2060 constitute a RdRp catalytic domain. Residues D1952 and D2046 each coordinate Mg(2+).

The protein belongs to the picornaviruses polyprotein family. In terms of assembly, interacts with capsid protein VP1 and capsid protein VP3 to form heterotrimeric protomers. As to quaternary structure, interacts with capsid protein VP0, and capsid protein VP3 to form heterotrimeric protomers. Five protomers subsequently associate to form pentamers which serve as building blocks for the capsid. Interacts with capsid protein VP2, capsid protein VP3 and capsid protein VP4 following cleavage of capsid protein VP0. Interacts with host ICAM1. Interacts with capsid protein VP1 and capsid protein VP3 in the mature capsid. In terms of assembly, interacts with capsid protein VP0 and capsid protein VP1 to form heterotrimeric protomers. Five protomers subsequently associate to form pentamers which serve as building blocks for the capsid. Interacts with capsid protein VP4 in the mature capsid. Interacts with protein 2C; this interaction may be important for virion morphogenesis. As to quaternary structure, interacts with capsid protein VP1 and capsid protein VP3. Homodimer. In terms of assembly, homohexamer; forms a hexameric ring structure with 6-fold symmetry characteristic of AAA+ ATPases. Interacts (via N-terminus) with host RTN3 (via reticulon domain); this interaction is important for viral replication. Interacts with capsid protein VP3; this interaction may be important for virion morphogenesis. As to quaternary structure, interacts with protein 3CD. Homodimer. Interacts with host GBF1. Interacts (via GOLD domain) with host ACBD3 (via GOLD domain); this interaction allows the formation of a viral protein 3A/ACBD3 heterotetramer with a 2:2 stoichiometry, which will stimulate the recruitment of host PI4KB in order to synthesize PI4P at the viral RNA replication sites. In terms of assembly, interacts with RNA-directed RNA polymerase. As to quaternary structure, interacts with protein 3AB and with RNA-directed RNA polymerase. Interacts with Viral protein genome-linked and with protein 3CD. It depends on Mg(2+) as a cofactor. In terms of processing, specific enzymatic cleavages in vivo by the viral proteases yield processing intermediates and the mature proteins. Post-translationally, myristoylation is required for the formation of pentamers during virus assembly. Further assembly of 12 pentamers and a molecule of genomic RNA generates the provirion. During virion maturation, immature virions are rendered infectious following cleavage of VP0 into VP4 and VP2. This maturation seems to be an autocatalytic event triggered by the presence of RNA in the capsid and it is followed by a conformational change infectious virion. In terms of processing, myristoylation is required during RNA encapsidation and formation of the mature virus particle. Post-translationally, VPg is uridylylated by the polymerase into VPg-pUpU. This acts as a nucleotide-peptide primer for the genomic RNA replication.

The protein localises to the virion. It localises to the host cytoplasm. Its subcellular location is the host cytoplasmic vesicle membrane. It is found in the host nucleus. It carries out the reaction a ribonucleoside 5'-triphosphate + H2O = a ribonucleoside 5'-diphosphate + phosphate + H(+). The enzyme catalyses Selective cleavage of Tyr-|-Gly bond in the picornavirus polyprotein.. The catalysed reaction is RNA(n) + a ribonucleoside 5'-triphosphate = RNA(n+1) + diphosphate. It catalyses the reaction Selective cleavage of Gln-|-Gly bond in the poliovirus polyprotein. In other picornavirus reactions Glu may be substituted for Gln, and Ser or Thr for Gly.. Its activity is regulated as follows. Replication or transcription is subject to high level of random mutations by the nucleotide analog ribavirin. In terms of biological role, forms an icosahedral capsid of pseudo T=3 symmetry with capsid proteins VP2 and VP3. The capsid is 300 Angstroms in diameter, composed of 60 copies of each capsid protein and enclosing the viral positive strand RNA genome. Capsid protein VP1 mainly forms the vertices of the capsid. Capsid protein VP1 interacts with host ICAM1 to provide virion attachment to target host cells. This attachment induces virion internalization. Tyrosine kinases are probably involved in the entry process. After binding to its receptor, the capsid undergoes conformational changes. Capsid protein VP1 N-terminus (that contains an amphipathic alpha-helix) and capsid protein VP4 are externalized. Together, they shape a pore in the host membrane through which viral genome is translocated to host cell cytoplasm. After genome has been released, the channel shrinks. Functionally, forms an icosahedral capsid of pseudo T=3 symmetry with capsid proteins VP2 and VP3. The capsid is 300 Angstroms in diameter, composed of 60 copies of each capsid protein and enclosing the viral positive strand RNA genome. Lies on the inner surface of the capsid shell. After binding to the host receptor, the capsid undergoes conformational changes. Capsid protein VP4 is released, Capsid protein VP1 N-terminus is externalized, and together, they shape a pore in the host membrane through which the viral genome is translocated into the host cell cytoplasm. Its function is as follows. Component of immature procapsids, which is cleaved into capsid proteins VP4 and VP2 after maturation. Allows the capsid to remain inactive before the maturation step. In terms of biological role, cysteine protease that cleaves viral polyprotein and specific host proteins. It is responsible for the autocatalytic cleavage between the P1 and P2 regions, which is the first cleavage occurring in the polyprotein. Also cleaves the host translation initiation factor EIF4G1, in order to shut down the capped cellular mRNA translation. Inhibits the host nucleus-cytoplasm protein and RNA trafficking by cleaving host members of the nuclear pores including NUP62 and NUP153. Counteracts stress granule formation probably by antagonizing its assembly or promoting its dissassembly. Functionally, plays an essential role in the virus replication cycle by acting as a viroporin. Creates a pore in the host endoplasmic reticulum and as a consequence releases Ca2+ in the cytoplasm of infected cell. In turn, high levels of cytoplasmic calcium may trigger membrane trafficking and transport of viral ER-associated proteins to viroplasms, sites of viral genome replication. Induces and associates with structural rearrangements of intracellular membranes. Displays RNA-binding, nucleotide binding and NTPase activities. May play a role in virion morphogenesis and viral RNA encapsidation by interacting with the capsid protein VP3. Its function is as follows. Localizes the viral replication complex to the surface of membranous vesicles. Together with protein 3CD binds the Cis-Active RNA Element (CRE) which is involved in RNA synthesis initiation. Acts as a cofactor to stimulate the activity of 3D polymerase, maybe through a nucleid acid chaperone activity. In terms of biological role, localizes the viral replication complex to the surface of membranous vesicles. It inhibits host cell endoplasmic reticulum-to-Golgi apparatus transport and causes the disassembly of the Golgi complex, possibly through GBF1 interaction. This would result in depletion of MHC, trail receptors and IFN receptors at the host cell surface. Plays an essential role in viral RNA replication by recruiting ACBD3 and PI4KB at the viral replication sites, thereby allowing the formation of the rearranged membranous structures where viral replication takes place. Functionally, acts as a primer for viral RNA replication and remains covalently bound to viral genomic RNA. VPg is uridylylated prior to priming replication into VPg-pUpU. The oriI viral genomic sequence may act as a template for this. The VPg-pUpU is then used as primer on the genomic RNA poly(A) by the RNA-dependent RNA polymerase to replicate the viral genome. During genome replication, the VPg-RNA linkage is removed by the host TDP2, thereby accelerating replication. During the late stage of the replication cycle, host TDP2 is excluded from sites of viral RNA synthesis and encapsidation, allowing for the generation of progeny virions. Involved in the viral replication complex and viral polypeptide maturation. It exhibits protease activity with a specificity and catalytic efficiency that is different from protease 3C. Protein 3CD lacks polymerase activity. Protein 3CD binds to the 5'UTR of the viral genome. Its function is as follows. Major viral protease that mediates proteolytic processing of the polyprotein. Cleaves host EIF5B, contributing to host translation shutoff. Cleaves also host PABPC1, contributing to host translation shutoff. Cleaves host NLRP1, triggers host N-glycine-mediated degradation of the autoinhibitory NLRP1 N-terminal fragment. In terms of biological role, replicates the viral genomic RNA on the surface of intracellular membranes. May form linear arrays of subunits that propagate along a strong head-to-tail interaction called interface-I. Covalently attaches UMP to a tyrosine of VPg, which is used to prime RNA synthesis. The positive stranded RNA genome is first replicated at virus induced membranous vesicles, creating a dsRNA genomic replication form. This dsRNA is then used as template to synthesize positive stranded RNA genomes. ss(+)RNA genomes are either translated, replicated or encapsidated. This is Genome polyprotein from Homo sapiens (Human).